The primary structure comprises 263 residues: Glutamate racemase (263 aa).

Substrate contacts are provided by residues 10–11 (DS) and 42–43 (YG). Cysteine 73 (proton donor/acceptor) is an active-site residue. Substrate is bound at residue 74–75 (NS). The active-site Proton donor/acceptor is the cysteine 183. 184-185 (TH) lines the substrate pocket.

It belongs to the aspartate/glutamate racemases family.

It carries out the reaction L-glutamate = D-glutamate. It functions in the pathway cell wall biogenesis; peptidoglycan biosynthesis. Functionally, provides the (R)-glutamate required for cell wall biosynthesis. The sequence is that of Glutamate racemase from Acidothermus cellulolyticus (strain ATCC 43068 / DSM 8971 / 11B).